We begin with the raw amino-acid sequence, 285 residues long: Pantothenate synthetase (285 aa).

Position 30–37 (30–37) interacts with ATP; it reads MGNLHDGH. Residue H37 is the Proton donor of the active site. Q61 provides a ligand contact to (R)-pantoate. Q61 provides a ligand contact to beta-alanine. An ATP-binding site is contributed by 149–152; it reads GEKD. (R)-pantoate is bound at residue Q155. ATP-binding positions include I178 and 186–189; that span reads LSSR.

Belongs to the pantothenate synthetase family. Homodimer.

It is found in the cytoplasm. The catalysed reaction is (R)-pantoate + beta-alanine + ATP = (R)-pantothenate + AMP + diphosphate + H(+). It participates in cofactor biosynthesis; (R)-pantothenate biosynthesis; (R)-pantothenate from (R)-pantoate and beta-alanine: step 1/1. Catalyzes the condensation of pantoate with beta-alanine in an ATP-dependent reaction via a pantoyl-adenylate intermediate. The sequence is that of Pantothenate synthetase from Buchnera aphidicola subsp. Acyrthosiphon pisum (strain Tuc7).